Reading from the N-terminus, the 710-residue chain is F-box only protein 40 (710 aa).

A TRAF-type zinc finger spans residues 53–114; sequence EHTLLCPLEQ…VDSETFLHEN (62 aa). Disordered stretches follow at residues 152–174 and 234–279; these read DATE…GAVG and GSLG…SQEL. The span at 238-248 shows a compositional bias: basic and acidic residues; the sequence is KSEDKNGDVAG. The F-box domain occupies 572-626; the sequence is LNSLTSLPLEVLQYIAGFLDSISLSQLSQVSVLMRNICATLLQERGMVLSQWKKK.

In terms of assembly, directly interacts with SKP1 and CUL1. In terms of tissue distribution, expressed only in heart and skeletal muscle.

It is found in the cytoplasm. In terms of biological role, probable substrate-recognition component of the SCF (SKP1-CUL1-F-box protein)-type E3 ubiquitin ligase complex that may function in myogenesis. This chain is F-box only protein 40 (Fbxo40), found in Mus musculus (Mouse).